We begin with the raw amino-acid sequence, 122 residues long: Basic phospholipase A2 CbII (122 aa).

7 disulfides stabilise this stretch: cysteine 26/cysteine 115, cysteine 28/cysteine 44, cysteine 43/cysteine 95, cysteine 49/cysteine 122, cysteine 50/cysteine 88, cysteine 57/cysteine 81, and cysteine 75/cysteine 86. 3 residues coordinate Ca(2+): tyrosine 27, glycine 29, and glycine 31. Histidine 47 is a catalytic residue. Residue aspartate 48 participates in Ca(2+) binding. Aspartate 89 is an active-site residue.

It belongs to the phospholipase A2 family. Group I subfamily. D49 sub-subfamily. Heterodimer of an acidic subunit (CbIalpha or CbIbeta) and a basic subunit (CbII). The acidic subunit is non-toxic, and increases the toxicity of the basic subunit. The cofactor is Ca(2+). Expressed by the venom gland.

The protein localises to the secreted. The enzyme catalyses a 1,2-diacyl-sn-glycero-3-phosphocholine + H2O = a 1-acyl-sn-glycero-3-phosphocholine + a fatty acid + H(+). Heterodimer: presynaptic neurotoxin. In terms of biological role, monomer: Snake venom phospholipase A2 (PLA2) that exhibits strong anticoagulant effects by binding to factor Xa (F10) and inhibiting the prothrombinase activity (IC(50) is 20 nM). PLA2 catalyzes the calcium-dependent hydrolysis of the 2-acyl groups in 3-sn-phosphoglycerides. The polypeptide is Basic phospholipase A2 CbII (Pseudocerastes fieldi (Field's horned viper)).